A 476-amino-acid polypeptide reads, in one-letter code: Bifunctional protein GlmU (476 aa).

The tract at residues 1-232 is pyrophosphorylase; the sequence is MDNLAAIILA…PVEVMGINDR (232 aa). Residues 9-12, lysine 23, glutamine 75, and 80-81 contribute to the UDP-N-acetyl-alpha-D-glucosamine site; these read LAAG and GT. Aspartate 105 contacts Mg(2+). UDP-N-acetyl-alpha-D-glucosamine is bound by residues glycine 142, glutamate 157, asparagine 172, and asparagine 230. Asparagine 230 provides a ligand contact to Mg(2+). Residues 233 to 253 are linker; sequence VQLAEAARHARRRIAEEHMLN. The tract at residues 254–476 is N-acetyltransferase; sequence GVTLVDPAAT…EGWKLRKRDQ (223 aa). Positions 353 and 371 each coordinate UDP-N-acetyl-alpha-D-glucosamine. The active-site Proton acceptor is histidine 383. UDP-N-acetyl-alpha-D-glucosamine contacts are provided by tyrosine 386 and asparagine 397. Residues 406–407, serine 425, alanine 443, and arginine 460 contribute to the acetyl-CoA site; that span reads NY.

The protein in the N-terminal section; belongs to the N-acetylglucosamine-1-phosphate uridyltransferase family. This sequence in the C-terminal section; belongs to the transferase hexapeptide repeat family. In terms of assembly, homotrimer. Requires Mg(2+) as cofactor.

It is found in the cytoplasm. The enzyme catalyses alpha-D-glucosamine 1-phosphate + acetyl-CoA = N-acetyl-alpha-D-glucosamine 1-phosphate + CoA + H(+). It catalyses the reaction N-acetyl-alpha-D-glucosamine 1-phosphate + UTP + H(+) = UDP-N-acetyl-alpha-D-glucosamine + diphosphate. It participates in nucleotide-sugar biosynthesis; UDP-N-acetyl-alpha-D-glucosamine biosynthesis; N-acetyl-alpha-D-glucosamine 1-phosphate from alpha-D-glucosamine 6-phosphate (route II): step 2/2. It functions in the pathway nucleotide-sugar biosynthesis; UDP-N-acetyl-alpha-D-glucosamine biosynthesis; UDP-N-acetyl-alpha-D-glucosamine from N-acetyl-alpha-D-glucosamine 1-phosphate: step 1/1. Its pathway is bacterial outer membrane biogenesis; LPS lipid A biosynthesis. In terms of biological role, catalyzes the last two sequential reactions in the de novo biosynthetic pathway for UDP-N-acetylglucosamine (UDP-GlcNAc). The C-terminal domain catalyzes the transfer of acetyl group from acetyl coenzyme A to glucosamine-1-phosphate (GlcN-1-P) to produce N-acetylglucosamine-1-phosphate (GlcNAc-1-P), which is converted into UDP-GlcNAc by the transfer of uridine 5-monophosphate (from uridine 5-triphosphate), a reaction catalyzed by the N-terminal domain. In Geobacter sulfurreducens (strain ATCC 51573 / DSM 12127 / PCA), this protein is Bifunctional protein GlmU.